A 587-amino-acid chain; its full sequence is Bifunctional lycopene cyclase/phytoene synthase (587 aa).

A lycopene beta-cyclase region spans residues 1–236 (MGLDYILVHV…IVFGLVCIDY (236 aa)). The next 7 membrane-spanning stretches (helical) occupy residues 5 to 25 (YILVHVTYNIPLAGILTLVYW), 35 to 55 (KISTLVIISLVATIPWDSYLV), 65 to 85 (NGVIGWTLYDIPSEEVFFFII), 91 to 111 (SLVYLILTRWLVLPMYLGTVA), 116 to 136 (LIGASILLLAISVGLIALCFG), 145 to 165 (IITWAGPFLLIQWVFSSGFII), and 218 to 238 (LFFLITNIVIVFGLVCIDYAI). The segment at 243 to 587 (CELVQSPQAV…VAYRAMAWRK (345 aa)) is phytoene synthase.

This sequence in the N-terminal section; belongs to the lycopene beta-cyclase family. The protein in the C-terminal section; belongs to the phytoene/squalene synthase family.

It localises to the membrane. The enzyme catalyses all-trans-lycopene = gamma-carotene. The catalysed reaction is gamma-carotene = all-trans-beta-carotene. It carries out the reaction 2 (2E,6E,10E)-geranylgeranyl diphosphate = 15-cis-phytoene + 2 diphosphate. The protein operates within carotenoid biosynthesis; beta-carotene biosynthesis. It functions in the pathway carotenoid biosynthesis; phytoene biosynthesis; all-trans-phytoene from geranylgeranyl diphosphate: step 1/1. In terms of biological role, bifunctional enzyme that catalyzes the reactions from geranylgeranyl diphosphate to phytoene (phytoene synthase) and lycopene to beta-carotene via the intermediate gamma-carotene (lycopene cyclase). The protein is Bifunctional lycopene cyclase/phytoene synthase of Aspergillus oryzae (strain ATCC 42149 / RIB 40) (Yellow koji mold).